Consider the following 2754-residue polypeptide: Neurobeachin-like protein 2 (2754 aa).

Disordered regions lie at residues 1298 to 1338 (TAGS…SEAP) and 1364 to 1438 (SVGS…QQTS). Composition is skewed to pro residues over residues 1301–1323 (SPPPSSPESPTSPKPAPPKPPTE) and 1388–1400 (TPSPLDGPRPFPA). Over residues 1425 to 1437 (GDDTSNTSNPQQT) the composition is skewed to polar residues. Position 1647 is a phosphoserine (S1647). T1867 bears the Phosphothreonine mark. Residues 1915-2040 (EQREKLVLSA…VRNQVYSWLL (126 aa)) enclose the BEACH-type PH domain. Residues 2053–2345 (RSPQEMLRAS…QLLKEPHPTR (293 aa)) form the BEACH domain. WD repeat units lie at residues 2386-2424 (LVLALVPHRQPHSFITQGSPDLLVTVSASGLLGTHSWLP), 2448-2491 (RLLS…ALPR), 2494-2531 (LLSQLSCHLDVVTCLALDTCGIYLISGSRDTTCMVWRL), 2544-2582 (KPVQVLYGHGAAVSCVAISTELDMAVSGSEDGTVIIHTV), 2589-2631 (AALR…TYSL), 2639-2674 (KLRASLPLAEQPTALTVTEDFVLLGTAQCALHILQL), and 2682-2717 (PPLPMKVAIRSVAVTKERSHVLVGLEDGKLIVVVAG). Phosphoserine is present on residues S2739 and S2742.

This sequence belongs to the WD repeat neurobeachin family. As to expression, expressed in megakaryocytes.

It is found in the endoplasmic reticulum. Functionally, probably involved in thrombopoiesis. Plays a role in the development or secretion of alpha-granules, that contain several growth factors important for platelet biogenesis. In Homo sapiens (Human), this protein is Neurobeachin-like protein 2 (NBEAL2).